The chain runs to 418 residues: AP-1 complex subunit mu (418 aa).

The MHD domain maps to 176–417 (NNEAYFDVTE…VTKAGKFQVR (242 aa)).

It belongs to the adaptor complexes medium subunit family. In terms of assembly, adaptor protein complex 1 (AP-1) is a heterotetramer composed of two large adaptins (gamma- and beta'-type subunits), a medium adaptin (mu-type subunit AP47) and a small adaptin (sigma-type subunit AP19). In terms of processing, regulated by phosphorylation.

It is found in the golgi apparatus. The protein resides in the cytoplasmic vesicle. It localises to the clathrin-coated vesicle membrane. Component of the adapter complexes which link clathrin to receptors in coated vesicles. Clathrin-associated protein complexes are believed to interact with the cytoplasmic tails of membrane proteins, leading to their selection and concentration. AP47 is a subunit of the plasma membrane adapter. The chain is AP-1 complex subunit mu from Diplobatis ommata (Ocellated electric ray).